The following is a 315-amino-acid chain: MKIIKISPRGYCYGVVDAMVIARNAALDKSLPRPIYILGMIVHNKHVTDAFEEDGIITLDGPSRLEILDQIDSGTVIFTAHGVSPEVKQRAKEKGLTTIDATCPDVTKTHDLIEAKKSEGYHVIYIGKKGHPEPEGAVGIAPDIVHLIEKADDLKTLEIPTDKILVTNQTTMSQWDVQHLMEDIKKKFPTAEFHKEICLATQVRQEAVAKQADVADLTIVVGDPKSNNSNRLAQVSQEIAGTKAYRVADVSEIQLEWLQGVEAVAVTAGASTPTPITKEVIAFLEQYDPTNPATWERKRNVPLQKILPRVKVKKQ.

Cys12 contacts [4Fe-4S] cluster. His43 and His81 together coordinate (2E)-4-hydroxy-3-methylbut-2-enyl diphosphate. His43 and His81 together coordinate dimethylallyl diphosphate. Residues His43 and His81 each contribute to the isopentenyl diphosphate site. Cys103 is a binding site for [4Fe-4S] cluster. His131 is a binding site for (2E)-4-hydroxy-3-methylbut-2-enyl diphosphate. His131 contributes to the dimethylallyl diphosphate binding site. His131 provides a ligand contact to isopentenyl diphosphate. The active-site Proton donor is the Glu133. Thr170 is a (2E)-4-hydroxy-3-methylbut-2-enyl diphosphate binding site. Cys198 contributes to the [4Fe-4S] cluster binding site. (2E)-4-hydroxy-3-methylbut-2-enyl diphosphate-binding residues include Ser226, Asn228, and Ser271. Dimethylallyl diphosphate is bound by residues Ser226, Asn228, and Ser271. Isopentenyl diphosphate contacts are provided by Ser226, Asn228, and Ser271.

This sequence belongs to the IspH family. Requires [4Fe-4S] cluster as cofactor.

It carries out the reaction isopentenyl diphosphate + 2 oxidized [2Fe-2S]-[ferredoxin] + H2O = (2E)-4-hydroxy-3-methylbut-2-enyl diphosphate + 2 reduced [2Fe-2S]-[ferredoxin] + 2 H(+). The enzyme catalyses dimethylallyl diphosphate + 2 oxidized [2Fe-2S]-[ferredoxin] + H2O = (2E)-4-hydroxy-3-methylbut-2-enyl diphosphate + 2 reduced [2Fe-2S]-[ferredoxin] + 2 H(+). It participates in isoprenoid biosynthesis; dimethylallyl diphosphate biosynthesis; dimethylallyl diphosphate from (2E)-4-hydroxy-3-methylbutenyl diphosphate: step 1/1. The protein operates within isoprenoid biosynthesis; isopentenyl diphosphate biosynthesis via DXP pathway; isopentenyl diphosphate from 1-deoxy-D-xylulose 5-phosphate: step 6/6. Catalyzes the conversion of 1-hydroxy-2-methyl-2-(E)-butenyl 4-diphosphate (HMBPP) into a mixture of isopentenyl diphosphate (IPP) and dimethylallyl diphosphate (DMAPP). Acts in the terminal step of the DOXP/MEP pathway for isoprenoid precursor biosynthesis. In Bacillus cytotoxicus (strain DSM 22905 / CIP 110041 / 391-98 / NVH 391-98), this protein is 4-hydroxy-3-methylbut-2-enyl diphosphate reductase.